Consider the following 296-residue polypeptide: uncharacterized protein (296 aa).

Residues 1 to 21 form a helical membrane-spanning segment; that stretch reads MIFAVVDILEISIQLLCILLF.

It is found in the membrane. This is an uncharacterized protein from Caenorhabditis elegans.